The sequence spans 299 residues: Glutamate formimidoyltransferase (299 aa).

Residue His-82 is the For formimidoyltransferase activity of the active site. Residue 163-172 (GDRKIHPTAG) participates in folate binding.

This sequence belongs to the formiminotransferase family.

Its subcellular location is the cytoplasm. The catalysed reaction is (6S)-5-formyl-5,6,7,8-tetrahydrofolate + L-glutamate = N-formyl-L-glutamate + (6S)-5,6,7,8-tetrahydrofolate + H(+). It catalyses the reaction 5-formimidoyltetrahydrofolate + L-glutamate = N-formimidoyl-L-glutamate + (6S)-5,6,7,8-tetrahydrofolate. The enzyme catalyses (6S)-5-formyl-5,6,7,8-tetrahydrofolate + ATP = (6R)-5,10-methenyltetrahydrofolate + ADP + phosphate. Its pathway is amino-acid degradation; L-histidine degradation into L-glutamate; L-glutamate from N-formimidoyl-L-glutamate (transferase route): step 1/1. It participates in one-carbon metabolism; tetrahydrofolate interconversion. Its function is as follows. Catalyzes the transfer of the formyl group from N-formylglutamate to tetrahydrofolate (THF) to yield 5-formyltetrahydrofolate (5-CHO-THF) and glutamate (Glu). The triglutamate form of 5-CHO-THF (5-CHO-THF-Glu3) can also be used as substrate. It can also catalyze the transfer of the formimino group from N-formiminoglutamate to tetrahydrofolate (THF) to yield 5-formiminotetrahydrofolate (5-NH=CH-THF) and glutamate (Glu). It can replace YgfA to catalyze the irreversible ATP-dependent transformation of 5-CHO-THF to form 5,10-methenyltetrahydrofolate (5,10-CH=THF). The protein is Glutamate formimidoyltransferase of Streptococcus pyogenes serotype M1.